The primary structure comprises 242 residues: Methylthioribulose-1-phosphate dehydratase (242 aa).

A compositionally biased stretch (basic and acidic residues) spans M1–D11. The segment at M1–E20 is disordered. C100 lines the substrate pocket. 2 residues coordinate Zn(2+): H117 and H119. E146 serves as the catalytic Proton donor/acceptor. Residue H202 coordinates Zn(2+).

The protein belongs to the aldolase class II family. MtnB subfamily. Requires Zn(2+) as cofactor.

The protein localises to the cytoplasm. The enzyme catalyses 5-(methylsulfanyl)-D-ribulose 1-phosphate = 5-methylsulfanyl-2,3-dioxopentyl phosphate + H2O. Its pathway is amino-acid biosynthesis; L-methionine biosynthesis via salvage pathway; L-methionine from S-methyl-5-thio-alpha-D-ribose 1-phosphate: step 2/6. In terms of biological role, catalyzes the dehydration of methylthioribulose-1-phosphate (MTRu-1-P) into 2,3-diketo-5-methylthiopentyl-1-phosphate (DK-MTP-1-P). This is Methylthioribulose-1-phosphate dehydratase from Aspergillus niger (strain ATCC MYA-4892 / CBS 513.88 / FGSC A1513).